The sequence spans 312 residues: Methionyl-tRNA formyltransferase (312 aa).

A (6S)-5,6,7,8-tetrahydrofolate-binding site is contributed by 112-115; it reads SLLP.

The protein belongs to the Fmt family.

It catalyses the reaction L-methionyl-tRNA(fMet) + (6R)-10-formyltetrahydrofolate = N-formyl-L-methionyl-tRNA(fMet) + (6S)-5,6,7,8-tetrahydrofolate + H(+). Its function is as follows. Attaches a formyl group to the free amino group of methionyl-tRNA(fMet). The formyl group appears to play a dual role in the initiator identity of N-formylmethionyl-tRNA by promoting its recognition by IF2 and preventing the misappropriation of this tRNA by the elongation apparatus. The polypeptide is Methionyl-tRNA formyltransferase (Syntrophus aciditrophicus (strain SB)).